The following is a 211-amino-acid chain: Imidazole glycerol phosphate synthase subunit HisH (211 aa).

Positions 3-211 constitute a Glutamine amidotransferase type-1 domain; that stretch reads VVAVIDYEMG…VSQVREKIAA (209 aa). The active-site Nucleophile is the Cys-81. Residues His-186 and Glu-188 contribute to the active site.

As to quaternary structure, heterodimer of HisH and HisF.

The protein resides in the cytoplasm. It carries out the reaction 5-[(5-phospho-1-deoxy-D-ribulos-1-ylimino)methylamino]-1-(5-phospho-beta-D-ribosyl)imidazole-4-carboxamide + L-glutamine = D-erythro-1-(imidazol-4-yl)glycerol 3-phosphate + 5-amino-1-(5-phospho-beta-D-ribosyl)imidazole-4-carboxamide + L-glutamate + H(+). The enzyme catalyses L-glutamine + H2O = L-glutamate + NH4(+). Its pathway is amino-acid biosynthesis; L-histidine biosynthesis; L-histidine from 5-phospho-alpha-D-ribose 1-diphosphate: step 5/9. In terms of biological role, IGPS catalyzes the conversion of PRFAR and glutamine to IGP, AICAR and glutamate. The HisH subunit catalyzes the hydrolysis of glutamine to glutamate and ammonia as part of the synthesis of IGP and AICAR. The resulting ammonia molecule is channeled to the active site of HisF. In Nostoc sp. (strain PCC 7120 / SAG 25.82 / UTEX 2576), this protein is Imidazole glycerol phosphate synthase subunit HisH.